Consider the following 264-residue polypeptide: tRNA pseudouridine synthase A (264 aa).

The Nucleophile role is filled by Asp51. Tyr109 contacts substrate.

It belongs to the tRNA pseudouridine synthase TruA family. In terms of assembly, homodimer.

The enzyme catalyses uridine(38/39/40) in tRNA = pseudouridine(38/39/40) in tRNA. Formation of pseudouridine at positions 38, 39 and 40 in the anticodon stem and loop of transfer RNAs. This chain is tRNA pseudouridine synthase A, found in Aromatoleum aromaticum (strain DSM 19018 / LMG 30748 / EbN1) (Azoarcus sp. (strain EbN1)).